Reading from the N-terminus, the 377-residue chain is Probable protein phosphatase 2C 61 (377 aa).

Residues 30-338 form the PPM-type phosphatase domain; sequence AAGEFSMAAA…DDITAVVVFL (309 aa). Mn(2+) contacts are provided by Asp64, Gly65, Asp269, and Asp329.

This sequence belongs to the PP2C family. It depends on Mg(2+) as a cofactor. The cofactor is Mn(2+).

It catalyses the reaction O-phospho-L-seryl-[protein] + H2O = L-seryl-[protein] + phosphate. The catalysed reaction is O-phospho-L-threonyl-[protein] + H2O = L-threonyl-[protein] + phosphate. The polypeptide is Probable protein phosphatase 2C 61 (Oryza sativa subsp. japonica (Rice)).